The sequence spans 305 residues: tRNA pseudouridine synthase B (305 aa).

Asp-48 acts as the Nucleophile in catalysis.

The protein belongs to the pseudouridine synthase TruB family. Type 1 subfamily.

It catalyses the reaction uridine(55) in tRNA = pseudouridine(55) in tRNA. Responsible for synthesis of pseudouridine from uracil-55 in the psi GC loop of transfer RNAs. The polypeptide is tRNA pseudouridine synthase B (Actinobacillus pleuropneumoniae serotype 5b (strain L20)).